A 294-amino-acid chain; its full sequence is Ribosomal protein L11 methyltransferase (294 aa).

Residues Thr-146, Gly-167, Asp-189, and Asn-231 each contribute to the S-adenosyl-L-methionine site.

This sequence belongs to the methyltransferase superfamily. PrmA family.

It is found in the cytoplasm. It catalyses the reaction L-lysyl-[protein] + 3 S-adenosyl-L-methionine = N(6),N(6),N(6)-trimethyl-L-lysyl-[protein] + 3 S-adenosyl-L-homocysteine + 3 H(+). In terms of biological role, methylates ribosomal protein L11. This chain is Ribosomal protein L11 methyltransferase, found in Aliivibrio salmonicida (strain LFI1238) (Vibrio salmonicida (strain LFI1238)).